Consider the following 426-residue polypeptide: tRNA(Ile)-lysidine synthase (426 aa).

Ser21–Ser26 is an ATP binding site.

Belongs to the tRNA(Ile)-lysidine synthase family.

The protein resides in the cytoplasm. The catalysed reaction is cytidine(34) in tRNA(Ile2) + L-lysine + ATP = lysidine(34) in tRNA(Ile2) + AMP + diphosphate + H(+). Functionally, ligates lysine onto the cytidine present at position 34 of the AUA codon-specific tRNA(Ile) that contains the anticodon CAU, in an ATP-dependent manner. Cytidine is converted to lysidine, thus changing the amino acid specificity of the tRNA from methionine to isoleucine. The protein is tRNA(Ile)-lysidine synthase of Enterobacter sp. (strain 638).